The chain runs to 330 residues: Interleukin-12 subunit beta (330 aa).

The N-terminal stretch at 1-22 (MHPQQLVVSWFSLVLLASPIMA) is a signal peptide. One can recognise an Ig-like C2-type domain in the interval 23–106 (IWELEKNVYV…LSHSLLLLHK (84 aa)). C50 and C90 form a disulfide bridge. 2 N-linked (GlcNAc...) asparagine glycosylation sites follow: N136 and N224. Residues 239-330 (PPKNLQLKPL…WSEWASVSCS (92 aa)) form the Fibronectin type-III domain.

Belongs to the IL-12B family. Heterodimer with IL12A; disulfide-linked. The heterodimer is known as interleukin IL-12. Heterodimer with IL23A; disulfide-linked. The heterodimer is known as interleukin IL-23. Also secreted as a monomer. Interacts with NBR1; this interaction promotes IL-12 secretion.

It is found in the secreted. In terms of biological role, cytokine that can act as a growth factor for activated T and NK cells, enhance the lytic activity of NK/lymphokine-activated killer cells, and stimulate the production of IFN-gamma by resting PBMC. Functionally, associates with IL23A to form the IL-23 interleukin, a heterodimeric cytokine which functions in innate and adaptive immunity. IL-23 may constitute with IL-17 an acute response to infection in peripheral tissues. IL-23 binds to a heterodimeric receptor complex composed of IL12RB1 and IL23R, activates the Jak-Stat signaling cascade, stimulates memory rather than naive T-cells and promotes production of pro-inflammatory cytokines. IL-23 induces autoimmune inflammation and thus may be responsible for autoimmune inflammatory diseases and may be important for tumorigenesis. This Lama glama (Llama) protein is Interleukin-12 subunit beta (IL12B).